The primary structure comprises 130 residues: Large ribosomal subunit protein bL19 (130 aa).

Belongs to the bacterial ribosomal protein bL19 family.

Functionally, this protein is located at the 30S-50S ribosomal subunit interface and may play a role in the structure and function of the aminoacyl-tRNA binding site. The polypeptide is Large ribosomal subunit protein bL19 (Burkholderia vietnamiensis (strain G4 / LMG 22486) (Burkholderia cepacia (strain R1808))).